Consider the following 285-residue polypeptide: Probable ribosomal RNA small subunit methyltransferase A (285 aa).

S-adenosyl-L-methionine contacts are provided by His-29, Leu-31, Gly-58, Glu-79, Asp-107, and Asn-122.

The protein belongs to the class I-like SAM-binding methyltransferase superfamily. rRNA adenine N(6)-methyltransferase family. RsmA subfamily.

The protein localises to the cytoplasm. Its function is as follows. Specifically dimethylates two adjacent adenosines in the loop of a conserved hairpin near the 3'-end of 16S rRNA in the 30S particle. May play a critical role in biogenesis of 30S subunits. This is Probable ribosomal RNA small subunit methyltransferase A from Haloarcula marismortui (strain ATCC 43049 / DSM 3752 / JCM 8966 / VKM B-1809) (Halobacterium marismortui).